A 378-amino-acid chain; its full sequence is Geraniol dehydrogenase (378 aa).

Positions 48, 75, 105, 108, 111, 119, and 179 each coordinate Zn(2+).

This sequence belongs to the zinc-containing alcohol dehydrogenase family. As to quaternary structure, monomer. It depends on Zn(2+) as a cofactor.

It carries out the reaction (2E)-geraniol + NAD(+) = (2E)-geranial + NADH + H(+). The enzyme catalyses (2E,6E)-farnesol + NAD(+) = (2E,6E)-farnesal + NADH + H(+). In terms of biological role, catalyzes the NAD(+)-dependent oxidation of geraniol to geranial, playing an important role in the biosynthesis of neral, an alarm pheromone. Cannot use NADP(+). Also acts as a farnesol dehydrogenase by catalyzing the oxidation of (2E,6E)-farnesol to (2E,6E)-farnesal, with lower activity compared to geraniol dehydrogenase activity. In Carpoglyphus lactis (Dried fruit mite), this protein is Geraniol dehydrogenase.